Here is a 377-residue protein sequence, read N- to C-terminus: MTSTTASPAEIAANSSKKVIVGMSGGVDSSVSAYLLKQQGYQVEGLFMKNWEEDDTDEYCAAAEDLKDAQAVCDKLGIKLHTVNFAAEYWDNVFEYFLAEYKAGRTPNPDIMCNKEIKFKAFLEFADDILDADYIAMGHYVRRRDTDGKTEMLRGIDGNKDQSYFLYTLSHEQVARSLFPVGELEKPEVRRIAEEQGLITHDKKDSTGICFIGERKFKDFLATYLPAQPGNIETPEGDIIGRHEGLMYHTLGQRKGLGIGGMKNSNDDPWYVVDKDMARNVLVVAQGHEHPRLMSKGMRVNQLHWVDRTGPADGATISVKTRYRQQDIPCTVKIIDEQTIEVLFDEPVAAVTPGQSAVFYDGEVCLGGGIIDTLIKD.

ATP is bound by residues glycine 22 to serine 29 and methionine 48. Residues asparagine 108–aspartate 110 form an interaction with target base in tRNA region. The Nucleophile role is filled by cysteine 113. A disulfide bridge links cysteine 113 with cysteine 210. Residue glycine 138 participates in ATP binding. Residues lysine 160–glutamine 162 are interaction with tRNA. The Cysteine persulfide intermediate role is filled by cysteine 210. The interaction with tRNA stretch occupies residues arginine 322 to tyrosine 323.

This sequence belongs to the MnmA/TRMU family.

The protein resides in the cytoplasm. It carries out the reaction S-sulfanyl-L-cysteinyl-[protein] + uridine(34) in tRNA + AH2 + ATP = 2-thiouridine(34) in tRNA + L-cysteinyl-[protein] + A + AMP + diphosphate + H(+). Functionally, catalyzes the 2-thiolation of uridine at the wobble position (U34) of tRNA, leading to the formation of s(2)U34. The sequence is that of tRNA-specific 2-thiouridylase MnmA from Shewanella amazonensis (strain ATCC BAA-1098 / SB2B).